The chain runs to 185 residues: Protein-lysine palmitoyltransferase CyaC (185 aa).

Residues His33 and Asp102 contribute to the active site.

This sequence belongs to the RTX toxin acyltransferase family. As to quaternary structure, homodimer.

The protein resides in the cytoplasm. The catalysed reaction is hexadecanoyl-[ACP] + L-lysyl-[protein] = N(6)-hexadecanoyl-L-lysyl-[protein] + holo-[ACP] + H(+). It catalyses the reaction (9Z)-hexadecenoyl-[ACP] + L-lysyl-[protein] = N(6)-[(9Z)-hexadecenoyl]-L-lysyl-[protein] + holo-[ACP] + H(+). Functionally, protein-lysine palmitoyltransferase that catalyzes palmitoylation of the protoxin (CyaA) at two internal lysine residues, thereby converting it to the active toxin. This chain is Protein-lysine palmitoyltransferase CyaC, found in Bordetella bronchiseptica (strain ATCC BAA-588 / NCTC 13252 / RB50) (Alcaligenes bronchisepticus).